The chain runs to 275 residues: Beta-lactamase OXA-3 (275 aa).

The first 21 residues, 1-21 (MAIRIFAILFSTFVFGTFAHA), serve as a signal peptide directing secretion. Serine 72 functions as the Acyl-ester intermediate in the catalytic mechanism. The residue at position 75 (lysine 75) is an N6-carboxylysine. 210 to 212 (KTG) serves as a coordination point for substrate.

It belongs to the class-D beta-lactamase family.

It catalyses the reaction a beta-lactam + H2O = a substituted beta-amino acid. In terms of biological role, this is an oxacillin-hydrolyzing beta-lactamase. The polypeptide is Beta-lactamase OXA-3 (bla) (Pseudomonas aeruginosa).